The chain runs to 1342 residues: DNA-directed RNA polymerase subunit beta (1342 aa).

This sequence belongs to the RNA polymerase beta chain family. The RNAP catalytic core consists of 2 alpha, 1 beta, 1 beta' and 1 omega subunit. When a sigma factor is associated with the core the holoenzyme is formed, which can initiate transcription.

The catalysed reaction is RNA(n) + a ribonucleoside 5'-triphosphate = RNA(n+1) + diphosphate. Its function is as follows. DNA-dependent RNA polymerase catalyzes the transcription of DNA into RNA using the four ribonucleoside triphosphates as substrates. This is DNA-directed RNA polymerase subunit beta from Erwinia tasmaniensis (strain DSM 17950 / CFBP 7177 / CIP 109463 / NCPPB 4357 / Et1/99).